The following is a 283-amino-acid chain: uncharacterized protein (283 aa).

Y55 serves as the catalytic Proton donor.

It belongs to the aldo/keto reductase family.

It localises to the cytoplasm. The protein localises to the nucleus. This is an uncharacterized protein from Schizosaccharomyces pombe (strain 972 / ATCC 24843) (Fission yeast).